A 493-amino-acid chain; its full sequence is Cobyric acid synthase (493 aa).

Positions 246–440 (PIDIAVIKMP…IHGVFDGVVF (195 aa)) constitute a GATase cobBQ-type domain. Catalysis depends on cysteine 326, which acts as the Nucleophile. Residue histidine 432 is part of the active site.

Belongs to the CobB/CobQ family. CobQ subfamily.

It participates in cofactor biosynthesis; adenosylcobalamin biosynthesis. In terms of biological role, catalyzes amidations at positions B, D, E, and G on adenosylcobyrinic A,C-diamide. NH(2) groups are provided by glutamine, and one molecule of ATP is hydrogenolyzed for each amidation. The chain is Cobyric acid synthase from Clostridium botulinum (strain Kyoto / Type A2).